We begin with the raw amino-acid sequence, 132 residues long: Female-specific protein 800 (132 aa).

In terms of biological role, FS800 is likely to have some function in the production or maintenance of the schistosome egg. It may have a function unrelated to eggshell formation. This is Female-specific protein 800 from Schistosoma mansoni (Blood fluke).